The following is a 2148-amino-acid chain: MEHVTIKQSGTRADPFRVFIFGDQSSCNLSNLQLLLLKKSNIYLASFVDQVNFTLRHEIARLTTAERQSFPAFSSIQNLVTRALKKDKSVALESTLATIYHLCCFLNYFGDGQEAYPTGPNTHISGLCIGALAAAAVSSSKSLAELVQAGIDAVRVSLKVGLLVARTAALFSHQEPNGTSSSPWSYAVPDSQLPLAFAEEAIESYQVKTKIPPLSLPYISAKGQNSWTVSGPPEIVQHFLESSKFEKTLRLTPLAVHAPYHAPHIFSARDVEHIIHAVGPVSNISSKLSFISSSSSCNLPNGVKFQDLLYRAVEDILILSLDLREAAENIRLVLEATDDVQQCVLFPISTTVCPSLKQSFSPVLASRVSIVDCIMESVAANAGPKSTSGPKPSDSKIAIIGMSGRFPESADVEAFWDLLYQGLDVHRPVPPDRFNGESYYDVTGKRKNTCKVMHGCWINEPGLFDAKFFNISPKEAEQSDPGQRLALATAYEALESAGVVADRTPSTQRDRVGVFYGMTSDDYREVSCGQNVDTYFIPGGNRAFTPGKINYFFKYCGPSVSVDTACSSSLAAIHLACNSIWLNECDTAIAGGTNVMTNPDSFVGLDRGYFLSRTGNCHTFDDEADGYCRADAVGTVILKRLEDAIADHDPILGIISGAYTNHSADSVSITRPHSGAQEEIFSKLLTESGVHPHQVSYIEMHGTGTQAGDATEMTSVLNCFAPSTHPRRLPHESLHLGSTKANVGHAESASGVSALIKVLLMMEKNIIPPHCGIKGKINQKFPTDLDERNVHIAKTATQWNRRDEFNNIRRAFVNNFSAAGGNTALLVEDYPLPTVDSSQEDSRTAHVVAVSAKCVKSLKGNLENLKKFVQKQSSIEGFLPKLSYTTTARRMHHPFRVAIPAASSDQLLSALDQELKHESYRCTSESPVAFVFSGQGSQYSAIGRHLLHFTIFRDEVNSYDILAQRHGFPSIMPLIDGSVDIEDLEPLVVQLGTVCVQMALASLWIAFGMRPAYVVGHSLGHYAALKVAGVLTASDTIYLVAMRARLLQNKCSRGSHTMLAIRSSADEMQAYLDEDIYDIACINGPQDTVVSGCIDDIDRLSQKLMDNRIKVTRVNVPFAFHSAQVDPILDELEAIASQVEFHTPRVAIGCPLLGKTFVAGETSSLGADHIKRHCRETVNFRDILRSAKGDGLISEKTAWIEIGPHTVCSTLLRANINQDIVAVPSLMRNKDGWQVLASSVATLYRHGLPVDWDEYHHDFEACKQVLRLPAYSWDNKVYWIHYVYDWLLTRGDPPVQAAASLPAPPSSFSTASVHRIVHESVDKGKLTLTAECEFTSEQLREVVYGHVVNGNRVCSSSLYTDFGVTLGLYILETYRPDLKDHSVDVQDMVVNKALVHKEGSTMLLRINVILDMTDGKAASMSIYSVNSKGDKTADHAQSSLHFEQPKVWLRNWDSTQYYVERSIEWLKEKADQGLNSRMSSGVIYKLFSSLVDYSTAYKGMQEAIVNTEDFEATALVRFQVDEGNFRCNPMWVDSCGQLAGFLMNGHAKTPKDQVFINHGWQSFRTVRKLSKDKTYRTYVRMRCIEGTTYAGDVYIFDNEGIVGVCGGITFQGIPRKVLNTAMPPPKSQNEAQVHSSPAKSRPKPPGSASSVHSGRLARHTNIEPLKLDAALKSATAARDPMQALFKIVSEEIGIPSASVQNDLVFADYGVDSLLSLSISGRLREELDLDVESSVFETCATLADLATHLGFDTFSSDQSSGQSSSCGGLSPRSDSTGEITSNATTPPSLSPRGSVSGSQCKDVCAILAEEIGVSMSEITNDTDLGELGMDSLMSLAVLSRLREELELDLEGDFFVSHPKFSSFKHMFQQGHEDEIEPEPSAELKQYRATSTLLQGNPKSALYTLFLLPDGSGSSFSYAPINAVRKDVCVYGLNCPWLKSAEKLVQFGLKGLATLYVEEIRRRAPHGPYNLGGWSAGGICAYEAAIQFTREGETVERLILLDSPNPIGLEKLPARLFDFVNGLGLFGDGKAPDWLLAHFLAFIDALDEWKPVPWDKALGSNTPPPMTYILWAEDGICKGTDARPEYRDDDPREMKWLLENRTNFGGNNWDVLLGEPALSIERIQDANHFTMLRKGKNTERVAAFIRSTFG.

Residues 19–261 (FIFGDQSSCN…TPLAVHAPYH (243 aa)) are N-terminal acylcarrier protein transacylase domain (SAT). One can recognise a Ketosynthase family 3 (KS3) domain in the interval 394-829 (DSKIAIIGMS…GGNTALLVED (436 aa)). Active-site for beta-ketoacyl synthase activity residues include Cys-566, His-701, and His-745. The interval 929 to 1233 (AFVFSGQGSQ…PSLMRNKDGW (305 aa)) is malonyl-CoA:ACP transacylase (MAT) domain. Ser-1018 (for acyl/malonyl transferase activity) is an active-site residue. The tract at residues 1310–1624 (TASVHRIVHE…RKVLNTAMPP (315 aa)) is product template (PT) domain. Residues 1314–1447 (HRIVHESVDK…SSLHFEQPKV (134 aa)) form an N-terminal hotdog fold region. The region spanning 1314–1619 (HRIVHESVDK…FQGIPRKVLN (306 aa)) is the PKS/mFAS DH domain. The active-site Proton acceptor; for dehydratase activity is the His-1346. The interval 1474–1619 (LNSRMSSGVI…FQGIPRKVLN (146 aa)) is C-terminal hotdog fold. Asp-1533 acts as the Proton donor; for dehydratase activity in catalysis. Positions 1619 to 1655 (NTAMPPPKSQNEAQVHSSPAKSRPKPPGSASSVHSGR) are disordered. The segment covering 1627–1638 (SQNEAQVHSSPA) has biased composition (polar residues). The Carrier 1 domain maps to 1678–1752 (RDPMQALFKI…DLATHLGFDT (75 aa)). O-(pantetheine 4'-phosphoryl)serine is present on Ser-1712. The segment covering 1756 to 1769 (DQSSGQSSSCGGLS) has biased composition (low complexity). The segment at 1756-1796 (DQSSGQSSSCGGLSPRSDSTGEITSNATTPPSLSPRGSVSG) is disordered. Residues 1771–1796 (RSDSTGEITSNATTPPSLSPRGSVSG) are compositionally biased toward polar residues. The 78-residue stretch at 1793 to 1870 (SVSGSQCKDV…SFKHMFQQGH (78 aa)) folds into the Carrier 2 domain. The residue at position 1830 (Ser-1830) is an O-(pantetheine 4'-phosphoryl)serine. Residues 1882–2146 (LKQYRATSTL…ERVAAFIRST (265 aa)) are thioesterase (TE) domain. Ser-1973 functions as the For thioesterase activity in the catalytic mechanism.

Functionally, polyketide synthase; part of the Pks1 gene cluster that mediates the biosynthesis of an anthraquinone derivative pigment that contributes to conidial pigmentation that provides protection from UV radiation, heat and cold stress. The polyketide synthase Pks1 produces 1-acetyl-2,4,6,8-tetrahydroxy-9,10-anthraquinone though condensation of acetyl-CoA with malonyl-CoA. The dehydratase EthD and the laccase Mlac1 further convert the anthraquinone derivative into the final conidial pigment. The protein is Polyketide synthase 1 of Metarhizium acridum (strain CQMa 102).